A 193-amino-acid chain; its full sequence is Non-canonical purine NTP pyrophosphatase homolog (193 aa).

Belongs to the HAM1 NTPase family.

The chain is Non-canonical purine NTP pyrophosphatase homolog from Halalkalibacterium halodurans (strain ATCC BAA-125 / DSM 18197 / FERM 7344 / JCM 9153 / C-125) (Bacillus halodurans).